The primary structure comprises 1387 residues: DNA-directed RNA polymerase subunit beta'' (1387 aa).

Zn(2+)-binding residues include Cys220, Cys291, Cys298, and Cys301.

It belongs to the RNA polymerase beta' chain family. RpoC2 subfamily. As to quaternary structure, in plastids the minimal PEP RNA polymerase catalytic core is composed of four subunits: alpha, beta, beta', and beta''. When a (nuclear-encoded) sigma factor is associated with the core the holoenzyme is formed, which can initiate transcription. Requires Zn(2+) as cofactor.

The protein resides in the plastid. The protein localises to the chloroplast. The catalysed reaction is RNA(n) + a ribonucleoside 5'-triphosphate = RNA(n+1) + diphosphate. In terms of biological role, DNA-dependent RNA polymerase catalyzes the transcription of DNA into RNA using the four ribonucleoside triphosphates as substrates. The polypeptide is DNA-directed RNA polymerase subunit beta'' (Carica papaya (Papaya)).